The chain runs to 916 residues: Beta-scruin (916 aa).

6 Kelch repeats span residues 82 to 133 (AVLI…YFHG), 134 to 187 (KVYL…IMDE), 188 to 235 (RIFV…NNEG), 237 to 289 (IYVV…TQNK), 291 to 341 (IWIW…KAGT), and 342 to 390 (QVFI…GIPV). The interval 393 to 426 (SPASDITTSKTTRSGSRKTQKTLKDKQQSDIHAR) is disordered. The span at 414 to 425 (TLKDKQQSDIHA) shows a compositional bias: basic and acidic residues. Kelch repeat units lie at residues 586 to 637 (VIIA…YYRG), 638 to 691 (AIYV…VFND), 692 to 739 (SIYV…SHGG), 741 to 793 (LWVM…VCDD), 795 to 847 (IWLC…ALES), and 849 to 896 (LYLI…TIPP).

In terms of tissue distribution, sperm.

Its function is as follows. May have an enzymatic role. Found the acrosomal vesicle at the anterior of sperm but not in the acrosomal process. The protein is Beta-scruin of Limulus polyphemus (Atlantic horseshoe crab).